The chain runs to 332 residues: NADH-quinone oxidoreductase subunit H (332 aa).

Transmembrane regions (helical) follow at residues 4–24, 44–64, 78–98, 120–140, 165–185, 194–214, 255–275, 279–299, and 312–332; these read FAFFALEALIKCIIIIAIFAS, IGPDMVGPFGLIQLVADMIKL, FIFAIAPLISAICAFVSLAAI, VALLFVIGTSGLCFYAVFLGG, VGALALIAIVMLVGSFSLVDI, FSWLIFKQPLAFVLFIIALFI, IAGAILVTLLFLGGFNGFWII, IMMIVKSSFIFFWYFWARAAF, and YLILIPLAVVNLLITALAVLL.

This sequence belongs to the complex I subunit 1 family. As to quaternary structure, NDH-1 is composed of 14 different subunits. Subunits NuoA, H, J, K, L, M, N constitute the membrane sector of the complex.

It is found in the cell inner membrane. It carries out the reaction a quinone + NADH + 5 H(+)(in) = a quinol + NAD(+) + 4 H(+)(out). Functionally, NDH-1 shuttles electrons from NADH, via FMN and iron-sulfur (Fe-S) centers, to quinones in the respiratory chain. The immediate electron acceptor for the enzyme in this species is believed to be ubiquinone. Couples the redox reaction to proton translocation (for every two electrons transferred, four hydrogen ions are translocated across the cytoplasmic membrane), and thus conserves the redox energy in a proton gradient. This subunit may bind ubiquinone. This chain is NADH-quinone oxidoreductase subunit H, found in Campylobacter jejuni subsp. doylei (strain ATCC BAA-1458 / RM4099 / 269.97).